The primary structure comprises 500 residues: Oryzalexin D synthase (500 aa).

Residues 4–24 (SQMWLLWGALSVALFFYFSTL) form a helical membrane-spanning segment. Residue Cys-442 coordinates heme.

It belongs to the cytochrome P450 family. Requires heme as cofactor.

The protein localises to the membrane. The enzyme catalyses ent-cassa-12,15-diene + reduced [NADPH--hemoprotein reductase] + O2 = ent-11beta-hydroxycassa-12,15-diene + oxidized [NADPH--hemoprotein reductase] + H2O + H(+). It carries out the reaction ent-sandaracopimaradien-3beta-ol + reduced [NADPH--hemoprotein reductase] + O2 = oryzalexin D + oxidized [NADPH--hemoprotein reductase] + H2O + H(+). Its function is as follows. Enzyme of the diterpenoid metabolism involved in the biosynthesis of both phytocassane and the oryzalexin class of phytoalexins. Can hydroxylate syn-pimaradiene, ent-pimaradiene, ent-sandaracopimaradiene, ent-isokaurene, ent-kaurene, and ent-cassadiene, but no activity with syn-stemodene, syn-stemarene, syn-labdatriene, C11-alpha-hydroxy-ent-cassadiene or syn-pimadien-19-oic acid as substrates. Hydroxylates 3-alpha-hydroxy-ent-sandaracopimaradiene at C-7-beta, resulting in a 3-alpha,7-beta-diol corresponding to oryzalexins D. The sequence is that of Oryzalexin D synthase from Oryza sativa subsp. japonica (Rice).